A 407-amino-acid polypeptide reads, in one-letter code: Accessory Sec system protein translocase subunit SecY2 (407 aa).

A run of 10 helical transmembrane segments spans residues 13–33 (FLWT…TLPF), 65–85 (LFSV…MFAV), 104–124 (MLLT…NLPL), 133–153 (TTIM…LIWL), 158–178 (AAMG…AYIP), 190–210 (ISSL…YLAV), 248–268 (IMYA…IHFL), 287–307 (PAWF…FAFI), 345–365 (FALV…MVVL), and 370–390 (YLRL…VFSI).

The protein belongs to the SecY/SEC61-alpha family. SecY2 subfamily. As to quaternary structure, component of the accessory SecA2/SecY2 protein translocase complex required to export cell wall proteins. May form heterotrimers with SecE and SecG subunits.

It is found in the cell membrane. Part of the accessory SecA2/SecY2 system specifically required for export of possible cell wall proteins. The central subunit of a protein translocation channel. The polypeptide is Accessory Sec system protein translocase subunit SecY2 (Streptococcus sanguinis (strain SK36)).